The primary structure comprises 127 residues: Fluoride-specific ion channel FluC (127 aa).

Transmembrane regions (helical) follow at residues 4–24 (LLLAVFIGGGTGSVARWLLSM), 35–55 (LGTLTANLIGAFIIGMGFAWF), 71–91 (TGFCGGLTTFSTFSAEVVFLL), and 103–123 (VFVNLLGSFAMTALAFWLFSA). Na(+) contacts are provided by G75 and T78.

The protein belongs to the fluoride channel Fluc/FEX (TC 1.A.43) family.

It is found in the cell inner membrane. The catalysed reaction is fluoride(in) = fluoride(out). Its activity is regulated as follows. Na(+) is not transported, but it plays an essential structural role and its presence is essential for fluoride channel function. Fluoride-specific ion channel. Important for reducing fluoride concentration in the cell, thus reducing its toxicity. The sequence is that of Fluoride-specific ion channel FluC from Escherichia coli (strain ATCC 8739 / DSM 1576 / NBRC 3972 / NCIMB 8545 / WDCM 00012 / Crooks).